A 127-amino-acid chain; its full sequence is Protein ApaG (127 aa).

The ApaG domain maps to 3–127; sequence DDPRYRVEVE…FVLSVPRTLH (125 aa).

The polypeptide is Protein ApaG (Xanthomonas axonopodis pv. citri (strain 306)).